Here is a 376-residue protein sequence, read N- to C-terminus: Lipid-A-disaccharide synthase (376 aa).

This sequence belongs to the LpxB family.

The enzyme catalyses a lipid X + a UDP-2-N,3-O-bis[(3R)-3-hydroxyacyl]-alpha-D-glucosamine = a lipid A disaccharide + UDP + H(+). It participates in bacterial outer membrane biogenesis; LPS lipid A biosynthesis. Functionally, condensation of UDP-2,3-diacylglucosamine and 2,3-diacylglucosamine-1-phosphate to form lipid A disaccharide, a precursor of lipid A, a phosphorylated glycolipid that anchors the lipopolysaccharide to the outer membrane of the cell. The chain is Lipid-A-disaccharide synthase from Coxiella burnetii (strain CbuG_Q212) (Coxiella burnetii (strain Q212)).